The following is a 248-amino-acid chain: Geranylgeranylglyceryl phosphate synthase (248 aa).

Mg(2+) is bound by residues Asp25 and Ser50. Sn-glycerol 1-phosphate contacts are provided by residues 170 to 176 (YLEAGSG), 201 to 202 (GG), and 223 to 224 (GT).

This sequence belongs to the GGGP/HepGP synthase family. Group II subfamily. It depends on Mg(2+) as a cofactor.

It localises to the cytoplasm. The enzyme catalyses sn-glycerol 1-phosphate + (2E,6E,10E)-geranylgeranyl diphosphate = sn-3-O-(geranylgeranyl)glycerol 1-phosphate + diphosphate. It functions in the pathway membrane lipid metabolism; glycerophospholipid metabolism. In terms of biological role, prenyltransferase that catalyzes the transfer of the geranylgeranyl moiety of geranylgeranyl diphosphate (GGPP) to the C3 hydroxyl of sn-glycerol-1-phosphate (G1P). This reaction is the first ether-bond-formation step in the biosynthesis of archaeal membrane lipids. The protein is Geranylgeranylglyceryl phosphate synthase of Methanococcus aeolicus (strain ATCC BAA-1280 / DSM 17508 / OCM 812 / Nankai-3).